We begin with the raw amino-acid sequence, 251 residues long: Segregation and condensation protein A (251 aa).

The protein belongs to the ScpA family. In terms of assembly, component of a cohesin-like complex composed of ScpA, ScpB and the Smc homodimer, in which ScpA and ScpB bind to the head domain of Smc. The presence of the three proteins is required for the association of the complex with DNA.

Its subcellular location is the cytoplasm. In terms of biological role, participates in chromosomal partition during cell division. May act via the formation of a condensin-like complex containing Smc and ScpB that pull DNA away from mid-cell into both cell halves. The chain is Segregation and condensation protein A from Bacillus velezensis (strain DSM 23117 / BGSC 10A6 / LMG 26770 / FZB42) (Bacillus amyloliquefaciens subsp. plantarum).